Reading from the N-terminus, the 203-residue chain is Superoxide dismutase [Mn/Fe] (203 aa).

Residues His-27, His-81, Asp-163, and His-167 each coordinate Fe(3+). Mn(2+)-binding residues include His-27, His-81, Asp-163, and His-167.

This sequence belongs to the iron/manganese superoxide dismutase family. Mn(2+) serves as cofactor. The cofactor is Fe(3+).

The enzyme catalyses 2 superoxide + 2 H(+) = H2O2 + O2. Destroys superoxide anion radicals which are normally produced within the cells and which are toxic to biological systems. Catalyzes the dismutation of superoxide anion radicals into O2 and H2O2 by successive reduction and oxidation of the transition metal ion at the active site. The protein is Superoxide dismutase [Mn/Fe] (sodA) of Streptococcus mutans serotype c (strain ATCC 700610 / UA159).